A 235-amino-acid chain; its full sequence is Glycerol-3-phosphate acyltransferase (235 aa).

6 helical membrane passes run 2 to 22, 56 to 76, 94 to 114, 126 to 146, 152 to 172, and 190 to 210; these read FTLI…TSII, TVTI…VVFF, LIAG…GFKG, FGIA…VVFL, VASI…KYLF, and FIHD…AAAI.

The protein belongs to the PlsY family. Probably interacts with PlsX.

The protein resides in the cell inner membrane. The catalysed reaction is an acyl phosphate + sn-glycerol 3-phosphate = a 1-acyl-sn-glycero-3-phosphate + phosphate. It participates in lipid metabolism; phospholipid metabolism. Catalyzes the transfer of an acyl group from acyl-phosphate (acyl-PO(4)) to glycerol-3-phosphate (G3P) to form lysophosphatidic acid (LPA). This enzyme utilizes acyl-phosphate as fatty acyl donor, but not acyl-CoA or acyl-ACP. The polypeptide is Glycerol-3-phosphate acyltransferase (Chlorobium phaeobacteroides (strain BS1)).